Here is a 324-residue protein sequence, read N- to C-terminus: NADH-ubiquinone oxidoreductase chain 1 (324 aa).

Helical transmembrane passes span Ile5–Phe25, Phe75–Leu95, Leu106–Gly126, Ile146–Phe166, Thr177–Ala197, Leu228–Phe248, Gln259–Ile279, and Phe299–Ser319.

This sequence belongs to the complex I subunit 1 family.

The protein localises to the mitochondrion inner membrane. The enzyme catalyses a ubiquinone + NADH + 5 H(+)(in) = a ubiquinol + NAD(+) + 4 H(+)(out). Core subunit of the mitochondrial membrane respiratory chain NADH dehydrogenase (Complex I) that is believed to belong to the minimal assembly required for catalysis. Complex I functions in the transfer of electrons from NADH to the respiratory chain. The immediate electron acceptor for the enzyme is believed to be ubiquinone. The chain is NADH-ubiquinone oxidoreductase chain 1 (MT-ND1) from Squalus acanthias (Spiny dogfish).